The sequence spans 102 residues: Legumin-like protein Mac i 2 (102 aa).

Belongs to the 11S seed storage protein (globulins) family.

In terms of biological role, seed storage protein. This is Legumin-like protein Mac i 2 from Macadamia integrifolia (Macadamia nut).